A 468-amino-acid polypeptide reads, in one-letter code: H(+)/Cl(-) exchange transporter ClcA (468 aa).

Topologically, residues 1–32 (MIKRERIVKSVLAHVPKDAINQFVSRGSTPTS) are cytoplasmic. A helical transmembrane segment spans residues 33 to 69 (FSVLFMAAIVGTLAGLVGTYFEIAVHFVSETRTEWLK). The Periplasmic portion of the chain corresponds to 70-76 (SEIGSVL). The chain crosses the membrane as a helical span at residues 77-100 (PLWLAAILISGALAFIGYYLVNRF). A Selectivity filter part_1 motif is present at residues 106-110 (GSGIP). A chloride-binding site is contributed by Ser-107. An intramembrane region (helical) is located at residues 109 to 116 (IPEIEGAM). Residues 117–123 (DNIRSVR) lie on the Cytoplasmic side of the membrane. A run of 2 helical transmembrane segments spans residues 124-141 (WWRV…ALGS) and 148-166 (EGPT…TDIF). Residues 146-150 (GREGP) carry the Selectivity filter part_2 motif. Residues 167–176 (RVKDDDTRHS) are Cytoplasmic-facing. 2 intramembrane regions (helical) span residues 177 to 189 (LLAS…LAAA) and 193 to 201 (PLAAIMFVV). Topologically, residues 202-214 (EEMRPQFRYSLIS) are cytoplasmic. A helical transmembrane segment spans residues 215–232 (IRAVIISAIMANIVFRAI). Residues 233–252 (NGQEAVITMPQYQSPELQSL) are Periplasmic-facing. A helical transmembrane segment spans residues 253–281 (WLFLLLGSLFGVFGVVFNKLITIAQDSFV). Residues 282 to 287 (ALHKND) are Cytoplasmic-facing. The helical transmembrane segment at 288–309 (RKRYLITGTILGGVFGLLLLYV) threads the bilayer. The Periplasmic portion of the chain corresponds to 310–329 (PQLTGGGIGLIPDITNGNYS). 2 helical membrane passes run 330 to 349 (ISIL…LCFG) and 355 to 376 (GIFA…ASAD). The Selectivity filter part_3 signature appears at 355–359 (GIFAP). 2 residues coordinate chloride: Ile-356 and Phe-357. The Periplasmic segment spans residues 377–386 (MLLPSLTIEP). Residues 387–401 (GVFAIAGMGALFAAT) constitute an intramembrane region (helical). Positions 402–404 (VRA) form an intramembrane region, note=Loop between two helices. The helical intramembrane region spans 405–416 (PITGILLVIEMT). The note=Loop between two helices intramembrane region spans 417-421 (NNYYL). A helical transmembrane segment spans residues 422–438 (ILPLIITSLGAVIVAQL). Residues 439–468 (LGGQPIYSQLLHRTLKNDKLRQQDLPENQA) lie on the Cytoplasmic side of the membrane. A chloride-binding site is contributed by Tyr-445.

Belongs to the chloride channel (TC 2.A.49) family. ClcA subfamily. In terms of assembly, homodimer.

It localises to the cell inner membrane. It carries out the reaction 2 chloride(in) + H(+)(out) = 2 chloride(out) + H(+)(in). In terms of biological role, proton-coupled chloride transporter. Functions as antiport system and exchanges two chloride ions for 1 proton. Probably acts as an electrical shunt for an outwardly-directed proton pump that is linked to amino acid decarboxylation, as part of the extreme acid resistance (XAR) response. This Vibrio campbellii (strain ATCC BAA-1116) protein is H(+)/Cl(-) exchange transporter ClcA.